The following is a 304-amino-acid chain: tRNA pseudouridine synthase B (304 aa).

Asp48 (nucleophile) is an active-site residue.

It belongs to the pseudouridine synthase TruB family. Type 1 subfamily.

It carries out the reaction uridine(55) in tRNA = pseudouridine(55) in tRNA. Responsible for synthesis of pseudouridine from uracil-55 in the psi GC loop of transfer RNAs. This Pseudomonas aeruginosa (strain UCBPP-PA14) protein is tRNA pseudouridine synthase B.